Here is a 127-residue protein sequence, read N- to C-terminus: Large-conductance mechanosensitive channel (127 aa).

3 helical membrane-spanning segments follow: residues 9 to 29 (EFAM…GVAF), 32 to 52 (IVTA…LGGI), and 75 to 95 (VIDF…INLL).

Belongs to the MscL family. Homopentamer.

It localises to the cell inner membrane. Channel that opens in response to stretch forces in the membrane lipid bilayer. May participate in the regulation of osmotic pressure changes within the cell. The sequence is that of Large-conductance mechanosensitive channel from Legionella pneumophila (strain Paris).